We begin with the raw amino-acid sequence, 443 residues long: Phosphoribosylamine--glycine ligase (443 aa).

One can recognise an ATP-grasp domain in the interval 109-324 (RNLFKKYNIK…FLDVCFGISN (216 aa)). 140 to 202 (MTGLGKDVVV…EEKLVGVEFT (63 aa)) contacts ATP. Positions 282, 294, and 296 each coordinate Mg(2+). Mn(2+)-binding residues include Q282, E294, and N296.

It belongs to the GARS family. The cofactor is Mg(2+). Mn(2+) serves as cofactor.

The catalysed reaction is 5-phospho-beta-D-ribosylamine + glycine + ATP = N(1)-(5-phospho-beta-D-ribosyl)glycinamide + ADP + phosphate + H(+). Its pathway is purine metabolism; IMP biosynthesis via de novo pathway; N(1)-(5-phospho-D-ribosyl)glycinamide from 5-phospho-alpha-D-ribose 1-diphosphate: step 2/2. In Methanococcus vannielii (strain ATCC 35089 / DSM 1224 / JCM 13029 / OCM 148 / SB), this protein is Phosphoribosylamine--glycine ligase.